The sequence spans 516 residues: Probable 2-methylcitrate dehydratase (516 aa).

Belongs to the PrpD family.

The catalysed reaction is (2S,3S)-2-methylcitrate = 2-methyl-cis-aconitate + H2O. The protein operates within organic acid metabolism; propanoate degradation. Functionally, catalyzes the stereospecific dehydration of (2S,3S)-2-methylcitrate (2-MC) to yield the cis isomer of 2-methyl-aconitate. This is Probable 2-methylcitrate dehydratase (PDH1) from Saccharomyces cerevisiae (strain ATCC 204508 / S288c) (Baker's yeast).